Reading from the N-terminus, the 628-residue chain is tRNA (guanine(37)-N(1))-methyltransferase (628 aa).

S-adenosyl-L-methionine-binding positions include H265, 303 to 304, 342 to 343, and N445; these read DL and DG.

Belongs to the class I-like SAM-binding methyltransferase superfamily. TRM5/TYW2 family. In terms of assembly, monomer.

The protein resides in the mitochondrion matrix. Its subcellular location is the nucleus. It localises to the cytoplasm. The enzyme catalyses guanosine(37) in tRNA + S-adenosyl-L-methionine = N(1)-methylguanosine(37) in tRNA + S-adenosyl-L-homocysteine + H(+). Specifically methylates the N1 position of guanosine-37 in various cytoplasmic and mitochondrial tRNAs. Methylation is not dependent on the nature of the nucleoside 5' of the target nucleoside. This is the first step in the biosynthesis of wybutosine (yW), a modified base adjacent to the anticodon of tRNAs and required for accurate decoding. In Mycosarcoma maydis (Corn smut fungus), this protein is tRNA (guanine(37)-N(1))-methyltransferase.